Reading from the N-terminus, the 448-residue chain is MTPIQKFNRQLAAAKLLSPQQTVVVAVSTGVDSMVLLHLLQRLPAAERPRVVVAHVNHHLREQSQMEADYLRQYCQQQNLKLVMADWLPAAHPKSGIEAAGRQFRYHVFAKVMRENRATAVLTAHHANDQVETYLMKLARGGDISQLTGIATSRPFATGRLIRPLLTWSKDQLRNYAAEQHVVYFEDVTNQDVALTRNRIRHRVVPELMTVNPQLLKHVADYQQQLTTLLTAKKQMVTVLLSQVVTATGALVVDQWGALPSQWQLAVFATWLEQQTQQLFTESKLQPLVSWGQRTRPATSRLTVNAAWELYRNAGIIEALPIKKRGKKLMPREKIMVDLNQWQKITATQTVGIFTRVPNVVSQPFWLTEADWPLVWRPWQAGDRIVLKGGGHQLVRRLLIDRKVPAERREQVQVLVNAQGNVLWVVGHKFSYRTTGTQTVFLALKHES.

Position 28–33 (Ser28–Ser33) interacts with ATP.

Belongs to the tRNA(Ile)-lysidine synthase family.

The protein localises to the cytoplasm. The enzyme catalyses cytidine(34) in tRNA(Ile2) + L-lysine + ATP = lysidine(34) in tRNA(Ile2) + AMP + diphosphate + H(+). Functionally, ligates lysine onto the cytidine present at position 34 of the AUA codon-specific tRNA(Ile) that contains the anticodon CAU, in an ATP-dependent manner. Cytidine is converted to lysidine, thus changing the amino acid specificity of the tRNA from methionine to isoleucine. This is tRNA(Ile)-lysidine synthase from Lactiplantibacillus plantarum (strain ATCC BAA-793 / NCIMB 8826 / WCFS1) (Lactobacillus plantarum).